Here is a 262-residue protein sequence, read N- to C-terminus: Ribosomal RNA small subunit methyltransferase A (262 aa).

Positions 13, 15, 40, 61, 85, and 103 each coordinate S-adenosyl-L-methionine.

It belongs to the class I-like SAM-binding methyltransferase superfamily. rRNA adenine N(6)-methyltransferase family. RsmA subfamily.

It is found in the cytoplasm. The enzyme catalyses adenosine(1518)/adenosine(1519) in 16S rRNA + 4 S-adenosyl-L-methionine = N(6)-dimethyladenosine(1518)/N(6)-dimethyladenosine(1519) in 16S rRNA + 4 S-adenosyl-L-homocysteine + 4 H(+). Functionally, specifically dimethylates two adjacent adenosines (A1518 and A1519) in the loop of a conserved hairpin near the 3'-end of 16S rRNA in the 30S particle. May play a critical role in biogenesis of 30S subunits. This Bordetella petrii (strain ATCC BAA-461 / DSM 12804 / CCUG 43448) protein is Ribosomal RNA small subunit methyltransferase A.